The chain runs to 162 residues: Interleukin-2 (162 aa).

Positions 1–20 (MYKIQLLSCIALTLALVANG) are cleaved as a signal peptide. The O-linked (GalNAc...) threonine glycan is linked to Thr-23. The N-linked (GlcNAc...) asparagine glycan is linked to Asn-70. A disulfide bridge links Cys-79 with Cys-134.

It belongs to the IL-2 family.

The protein localises to the secreted. In terms of biological role, cytokine produced by activated CD4-positive helper T-cells and to a lesser extend activated CD8-positive T-cells and natural killer (NK) cells that plays pivotal roles in the immune response and tolerance. Binds to a receptor complex composed of either the high-affinity trimeric IL-2R (IL2RA/CD25, IL2RB/CD122 and IL2RG/CD132) or the low-affinity dimeric IL-2R (IL2RB and IL2RG). Interaction with the receptor leads to oligomerization and conformation changes in the IL-2R subunits resulting in downstream signaling starting with phosphorylation of JAK1 and JAK3. In turn, JAK1 and JAK3 phosphorylate the receptor to form a docking site leading to the phosphorylation of several substrates including STAT5. This process leads to activation of several pathways including STAT, phosphoinositide-3-kinase/PI3K and mitogen-activated protein kinase/MAPK pathways. Functions as a T-cell growth factor and can increase NK-cell cytolytic activity as well. Promotes strong proliferation of activated B-cells and subsequently immunoglobulin production. Plays a pivotal role in regulating the adaptive immune system by controlling the survival and proliferation of regulatory T-cells, which are required for the maintenance of immune tolerance. Moreover, participates in the differentiation and homeostasis of effector T-cell subsets, including Th1, Th2, Th17 as well as memory CD8-positive T-cells. The sequence is that of Interleukin-2 (IL2) from Cervus elaphus (Red deer).